The sequence spans 967 residues: RNA polymerase II C-terminal domain phosphatase-like 1 (967 aa).

The Nuclear localization signal (NLS) motif lies at 38 to 41 (RKKK). Residues 151 to 401 (LNLRCLGIVF…TPVLCVARNV (251 aa)) form the FCP1 homology domain. Disordered regions lie at residues 548-611 (SEPS…VQSR) and 643-712 (MEKH…RNSD). Positions 590–603 (PSEPSFPQRPPVQA) are enriched in pro residues. The span at 665–684 (RMLHENRRPPKESLRRDEQL) shows a compositional bias: basic and acidic residues. DRBM domains follow at residues 724-792 (TETS…NLAD) and 855-925 (GSIT…SVRS). The interval 928 to 967 (GQPLHKRQGSPRSFGGMSNKRLKPDFQRSLQRMPSSGRYS) is disordered. The tract at residues 945-967 (SNKRLKPDFQRSLQRMPSSGRYS) is required for nuclear localization (NLS). The Nuclear localization signal (NLS) motif lies at 947–951 (KRLKP). Residues 955–967 (RSLQRMPSSGRYS) are compositionally biased toward polar residues.

As to quaternary structure, interacts with FREE1, ANAC019, MYB3, MYB4 and MYB32. Binds to DMS3. Interacts with RCF3. Interacts with RS40 and RS41. Interacts with EIF4A3. Interacts with UPF3. It depends on Mg(2+) as a cofactor. The cofactor is Co(2+). Mn(2+) is required as a cofactor. As to expression, expressed at very low levels in roots, leaves, stems, flowers and siliques.

The protein localises to the nucleus. The protein resides in the nucleus speckle. It carries out the reaction O-phospho-L-seryl-[protein] + H2O = L-seryl-[protein] + phosphate. It catalyses the reaction O-phospho-L-threonyl-[protein] + H2O = L-threonyl-[protein] + phosphate. Functionally, processively dephosphorylates 'Ser-5' but not 'Ser-2' of the heptad repeats YSPTSPS in the C-terminal domain of the largest RNA polymerase II subunit (RPB1). This promotes the activity of RNA polymerase II. Together with CPL2, required for male gametes fertility. Multifunctional regulator that modulates plant growth, stress, and phytohormones responses. Negative regulator of stress gene transcription involved in abscisic acid (ABA) mediated and jasmonic acid (JA) mediated signaling pathways, NaCl, osmotic stress, wounding, and cold resistance. Negatively regulates the expression of jasmonic acid (JA) biosynthetic genes in response to wounding. Forms a complex with RCF3 that modulates co-transcriptional processes such as mRNA capping and polyadenylation, and functions to repress stress-inducible gene expression. Dephosphorylates RCF3. Involved in the dephosphorylation of EIF4A3. This dephosphorylation retains EIF4A3 in the nucleus and limits its accumulation in the cytoplasm. Is essential for the degradation of the nonsense-mediated mRNA decay (NMD) transcripts. In Arabidopsis thaliana (Mouse-ear cress), this protein is RNA polymerase II C-terminal domain phosphatase-like 1.